A 706-amino-acid polypeptide reads, in one-letter code: Zinc finger CCCH domain-containing protein 56 (706 aa).

2 ANK repeats span residues 83–113 (EQRT…ELNL) and 118–150 (DKST…DPNI). Low complexity predominate over residues 211-221 (SSLLSLDSVSS). Residues 211-235 (SSLLSLDSVSSPTKPHGTDVTFASE) form a disordered region. C3H1-type zinc fingers lie at residues 302–324 (PCPD…HGVF) and 332–356 (QYRT…HANE). Disordered stretches follow at residues 396-427 (PSAA…QQNI), 545-616 (SPKN…QTHG), and 652-692 (QMLK…TRES). 2 stretches are compositionally biased toward polar residues: residues 397–427 (SAAQ…QQNI) and 545–560 (SPKN…QASS). S568 is subject to Phosphoserine. Residues 580-592 (SRSLSSRDFGSSL) are compositionally biased toward low complexity. Composition is skewed to polar residues over residues 600 to 616 (DSGS…QTHG), 652 to 667 (QMLK…NRVV), and 677 to 686 (QGGSSVNPHN).

In Arabidopsis thaliana (Mouse-ear cress), this protein is Zinc finger CCCH domain-containing protein 56.